The primary structure comprises 452 residues: Probable cysteine protease RD21C (452 aa).

An N-terminal signal peptide occupies residues 1–29; the sequence is MATSIKSITLALLIFSVLLISLSLGSVTA. A propeptide spans 30-128 (activation peptide); sequence TETTRNEAEA…EKYLYKVGDS (99 aa). Asn82 carries N-linked (GlcNAc...) asparagine glycosylation. Cystine bridges form between Cys150–Cys192, Cys184–Cys226, Cys284–Cys335, Cys363–Cys375, and Cys369–Cys390. Cys153 is an active-site residue. Residues His290 and Asn310 contribute to the active site. The propeptide at 346 to 452 is removed in mature form; it reads KSSGSNPPKP…KSTNMLVGSA (107 aa).

This sequence belongs to the peptidase C1 family. As to quaternary structure, interacts with WSCP.

Its function is as follows. Probable thiol protease. The sequence is that of Probable cysteine protease RD21C from Arabidopsis thaliana (Mouse-ear cress).